The chain runs to 253 residues: Aminoglycoside nucleotidyltransferase (4') (253 aa).

Homodimer.

The catalysed reaction is kanamycin A + ATP = 4'-adenylylkanamycin A + diphosphate. It carries out the reaction amikacin + ATP = 4'-adenylylamikacin + diphosphate. The enzyme catalyses neomycin B + ATP = 4'-adenylylneomycin B + diphosphate. It catalyses the reaction paromomycin + ATP = 4'-adenylylparomomycin + diphosphate. The catalysed reaction is ribostamycin + ATP = 4'-adenylylribostamycin + diphosphate. It carries out the reaction tobramycin + ATP = 4'-adenylyltobramycin + diphosphate. The enzyme catalyses kanamycin A + CTP = 4'-cytidylylkanamycin A + diphosphate. It catalyses the reaction kanamycin A + GTP = 4'-guanylylkanamycin A + diphosphate. The catalysed reaction is kanamycin A + ITP = 4'-inosinylylkanamycin A + diphosphate. It carries out the reaction dTTP + kanamycin A = 4'-thymidylylkanamycin A + diphosphate. The enzyme catalyses kanamycin A + UTP = 4'-uridylylkanamycin A + diphosphate. It catalyses the reaction kanamycin A + dATP = 4'-(2'-deoxyadenylyl)kanamycin A + diphosphate. The catalysed reaction is kanamycin A + dCTP = 4'-(2'-deoxycytidylyl)kanamycin A + diphosphate. It carries out the reaction kanamycin A + dGTP = 4'-(2'-deoxyguanylyl)kanamycin A + diphosphate. The enzyme catalyses dUTP + kanamycin A = 4'-(2'-deoxyuridylyl)kanamycin A + diphosphate. It catalyses the reaction amikacin + GTP = 4'-guanylylamikacin + diphosphate. The catalysed reaction is amikacin + ITP = 4'-inosinylylamikacin + diphosphate. It carries out the reaction amikacin + CTP = 4'-cytidylylamikacin + diphosphate. The enzyme catalyses amikacin + UTP = 4'-uridylylamikacin + diphosphate. It catalyses the reaction amikacin + dTTP = 4'-thymidylylamikacin + diphosphate. Functionally, inactivates aminoglycoside antibiotics such as kanamycin by catalyzing the transfer of a nucleotidyl group from nucleoside triphosphates such as (d)ATP to the 4'-hydroxyl group of the aminoglycoside. The polypeptide is Aminoglycoside nucleotidyltransferase (4') (Bacillus sp).